We begin with the raw amino-acid sequence, 673 residues long: Estrogen receptor beta (673 aa).

Residues 1–181 (MASSPGLDPH…SAVGKADMHF (181 aa)) are modulating. 2 consecutive NR C4-type zinc fingers follow at residues 182 to 202 (CAVCHDYASGYHYGVWSCEGC) and 218 to 242 (CPATNQCTIDKNRRKSCQACRLRKC). The nuclear receptor DNA-binding region spans 182–247 (CAVCHDYASG…RLRKCYEVGM (66 aa)). Positions 316-552 (SPEEFISRIM…DLLLEMLDAN (237 aa)) constitute an NR LBD domain. The interval 553–602 (TSSGGSQPSSSPSSETYSDQHQYPQPPSHLHPGSEQTTADHAIVPPLGPT) is disordered. The span at 554–566 (SSGGSQPSSSPSS) shows a compositional bias: low complexity.

This sequence belongs to the nuclear hormone receptor family. NR3 subfamily. Binds DNA as a homodimer. Can form a heterodimer with ER-alpha. Abundant in the liver and testes, less abundant in the ovary and barely detectable in the muscle.

Its subcellular location is the nucleus. Binds estrogens with an affinity similar to that of ER-alpha, and activates expression of reporter genes containing estrogen response elements (ERE) in an estrogen-dependent manner. In Micropogonias undulatus (Atlantic croaker), this protein is Estrogen receptor beta (esr2).